Consider the following 142-residue polypeptide: Nucleoside diphosphate kinase (142 aa).

ATP is bound by residues K11, F59, R87, T93, R107, and N117. H120 functions as the Pros-phosphohistidine intermediate in the catalytic mechanism.

It belongs to the NDK family. In terms of assembly, homotetramer. The cofactor is Mg(2+).

The protein localises to the cytoplasm. The enzyme catalyses a 2'-deoxyribonucleoside 5'-diphosphate + ATP = a 2'-deoxyribonucleoside 5'-triphosphate + ADP. It carries out the reaction a ribonucleoside 5'-diphosphate + ATP = a ribonucleoside 5'-triphosphate + ADP. Major role in the synthesis of nucleoside triphosphates other than ATP. The ATP gamma phosphate is transferred to the NDP beta phosphate via a ping-pong mechanism, using a phosphorylated active-site intermediate. This chain is Nucleoside diphosphate kinase, found in Aquifex aeolicus (strain VF5).